Consider the following 472-residue polypeptide: Coronin-6 (472 aa).

5 WD repeats span residues 79 to 119, 129 to 169, 173 to 212, 216 to 259, and 264 to 304; these read GHTG…PVRN, GHSK…VLLS, IHPD…VVAE, AHEG…EPVA, and DTSN…PFVH. The disordered stretch occupies residues 409-434; it reads NILDVRPPASPRRSQSASEAPLSQQH. Residues 419-429 show a composition bias toward low complexity; the sequence is PRRSQSASEAP. Residues 430–469 adopt a coiled-coil conformation; it reads LSQQHTLETLLEEMKALRERVQAQEERITALENMLCELVD.

This chain is Coronin-6 (Coro6), found in Rattus norvegicus (Rat).